The chain runs to 374 residues: GPN-loop GTPase 1 (374 aa).

Ala2 carries the post-translational modification N-acetylalanine. Gly29 to Thr34 lines the GTP pocket. A Gly-Pro-Asn (GPN)-loop; involved in dimer interface motif is present at residues Gly86–Asn88. A GTP-binding site is contributed by Asn189–Asp192. Phosphoserine occurs at positions 301, 312, and 314. Residues Arg326–Glu354 are disordered. The residue at position 328 (Thr328) is a Phosphothreonine. Residues Asp330–Asp342 show a composition bias toward acidic residues. The residue at position 338 (Ser338) is a Phosphoserine. Thr340 bears the Phosphothreonine mark. Positions Ile343 to Glu354 are enriched in basic and acidic residues.

Belongs to the GPN-loop GTPase family. Heterodimer with GPN3. Binds to RNA polymerase II (RNAPII). Interacts directly with RNAPII subunits RPB4 and RPB7 and the CTD of RPB1. Interacts with XPA. Expressed ubiquitously.

The protein resides in the cytoplasm. It localises to the nucleus. In terms of biological role, small GTPase required for proper nuclear import of RNA polymerase II (RNAPII). May act at an RNAP assembly step prior to nuclear import. Forms an interface between the RNA polymerase II enzyme and chaperone/scaffolding proteins, suggesting that it is required to connect RNA polymerase II to regulators of protein complex formation. May be involved in nuclear localization of XPA. The chain is GPN-loop GTPase 1 from Homo sapiens (Human).